Here is a 386-residue protein sequence, read N- to C-terminus: Beta-citrylglutamate synthase B (386 aa).

An ATP-grasp domain is found at 119 to 304 (FQELAGHGVP…VAGIIADYAA (186 aa)). Residues lysine 158, 193-203 (QKYVKESHGRD), and arginine 219 each bind ATP. Residues aspartate 264, glutamate 277, and asparagine 279 each contribute to the Mg(2+) site. Mn(2+)-binding residues include aspartate 264, glutamate 277, and asparagine 279. Residues 325-359 (ASETSEPELGPPASTAVDNMSASSSSVDSDPESTE) are disordered. Over residues 338-352 (STAVDNMSASSSSVD) the composition is skewed to low complexity.

This sequence belongs to the RimK family. Mg(2+) serves as cofactor. Mn(2+) is required as a cofactor.

The protein localises to the cytoplasm. The catalysed reaction is citrate + L-glutamate + ATP = beta-citrylglutamate + ADP + phosphate + H(+). The enzyme catalyses N-acetyl-L-aspartate + L-glutamate + ATP = N-acetyl-L-aspartyl-L-glutamate + ADP + phosphate + H(+). Catalyzes the synthesis of beta-citryl-L-glutamate and N-acetyl-L-aspartyl-L-glutamate. Beta-citryl-L-glutamate is synthesized more efficiently than N-acetyl-L-aspartyl-L-glutamate. This chain is Beta-citrylglutamate synthase B (RIMKLB), found in Homo sapiens (Human).